The sequence spans 80 residues: Cortexin-3 (80 aa).

Residues 28–48 (TTFVFVILLFIFLGILIVRCF) traverse the membrane as a helical segment.

This sequence belongs to the cortexin family.

It localises to the membrane. The polypeptide is Cortexin-3 (Ctxn3) (Mus musculus (Mouse)).